The primary structure comprises 213 residues: Uridine kinase (213 aa).

13-20 serves as a coordination point for ATP; sequence GASASGKS.

The protein belongs to the uridine kinase family.

The protein localises to the cytoplasm. The catalysed reaction is uridine + ATP = UMP + ADP + H(+). The enzyme catalyses cytidine + ATP = CMP + ADP + H(+). The protein operates within pyrimidine metabolism; CTP biosynthesis via salvage pathway; CTP from cytidine: step 1/3. It participates in pyrimidine metabolism; UMP biosynthesis via salvage pathway; UMP from uridine: step 1/1. The chain is Uridine kinase from Haemophilus influenzae (strain PittGG).